Reading from the N-terminus, the 147-residue chain is SsrA-binding protein (147 aa).

Belongs to the SmpB family.

The protein localises to the cytoplasm. Required for rescue of stalled ribosomes mediated by trans-translation. Binds to transfer-messenger RNA (tmRNA), required for stable association of tmRNA with ribosomes. tmRNA and SmpB together mimic tRNA shape, replacing the anticodon stem-loop with SmpB. tmRNA is encoded by the ssrA gene; the 2 termini fold to resemble tRNA(Ala) and it encodes a 'tag peptide', a short internal open reading frame. During trans-translation Ala-aminoacylated tmRNA acts like a tRNA, entering the A-site of stalled ribosomes, displacing the stalled mRNA. The ribosome then switches to translate the ORF on the tmRNA; the nascent peptide is terminated with the 'tag peptide' encoded by the tmRNA and targeted for degradation. The ribosome is freed to recommence translation, which seems to be the essential function of trans-translation. This chain is SsrA-binding protein, found in Mycoplasma pneumoniae (strain ATCC 29342 / M129 / Subtype 1) (Mycoplasmoides pneumoniae).